The following is a 152-amino-acid chain: MKLILTADVDHLGAVGDTVEVKDGYGRNFLLPRGLAIVASRGAQKQADDIRRARETKAVRDLDHANELKTAIEALGPVTLPVKTAGDSGKLFGSVTAGDVVAAIKKAGGPNLDKRIVRLPKAHIKALGTHPVAVHLHPEVDVEVALEVVPQS.

The protein belongs to the bacterial ribosomal protein bL9 family.

Its function is as follows. Binds to the 23S rRNA. The polypeptide is Large ribosomal subunit protein bL9 (Mycobacterium avium (strain 104)).